A 144-amino-acid polypeptide reads, in one-letter code: Gonadotropin subunit beta-2 (144 aa).

A signal peptide spans 1–27; sequence MGTPVKILVVRNHILFSVVVLLAVAQS. 6 cysteine pairs are disulfide-bonded: Cys33–Cys81, Cys47–Cys96, Cys50–Cys134, Cys58–Cys112, Cys62–Cys114, and Cys117–Cys124. Asn37 is a glycosylation site (N-linked (GlcNAc...) asparagine). A propeptide spanning residues 143–144 is cleaved from the precursor; it reads VY.

It belongs to the glycoprotein hormones subunit beta family. As to quaternary structure, heterodimer of an alpha and a beta chain.

It is found in the secreted. Involved in gametogenesis and steroidogenesis. The polypeptide is Gonadotropin subunit beta-2 (cgbb) (Cyprinus carpio (Common carp)).